A 270-amino-acid chain; its full sequence is Formamidopyrimidine-DNA glycosylase (270 aa).

The active-site Schiff-base intermediate with DNA is the P2. E3 (proton donor) is an active-site residue. Catalysis depends on K57, which acts as the Proton donor; for beta-elimination activity. Positions 90, 109, and 151 each coordinate DNA. The FPG-type zinc-finger motif lies at 236-270; that stretch reads RVYGRKGQACEVCESEIQSVTLGQRNTFFCEQCQK. The active-site Proton donor; for delta-elimination activity is R260.

It belongs to the FPG family. In terms of assembly, monomer. Zn(2+) is required as a cofactor.

The catalysed reaction is Hydrolysis of DNA containing ring-opened 7-methylguanine residues, releasing 2,6-diamino-4-hydroxy-5-(N-methyl)formamidopyrimidine.. The enzyme catalyses 2'-deoxyribonucleotide-(2'-deoxyribose 5'-phosphate)-2'-deoxyribonucleotide-DNA = a 3'-end 2'-deoxyribonucleotide-(2,3-dehydro-2,3-deoxyribose 5'-phosphate)-DNA + a 5'-end 5'-phospho-2'-deoxyribonucleoside-DNA + H(+). Involved in base excision repair of DNA damaged by oxidation or by mutagenic agents. Acts as a DNA glycosylase that recognizes and removes damaged bases. Has a preference for oxidized purines, such as 7,8-dihydro-8-oxoguanine (8-oxoG). Has AP (apurinic/apyrimidinic) lyase activity and introduces nicks in the DNA strand. Cleaves the DNA backbone by beta-delta elimination to generate a single-strand break at the site of the removed base with both 3'- and 5'-phosphates. This is Formamidopyrimidine-DNA glycosylase from Pseudoalteromonas atlantica (strain T6c / ATCC BAA-1087).